The primary structure comprises 464 residues: Protein FAM90A20 (464 aa).

Disordered stretches follow at residues 16–42 (RAQT…DPRL), 71–213 (ATLG…IPRP), 228–247 (PTHS…ASKT), 254–273 (VRTQ…CPSA), 309–389 (RLGP…HDGA), and 418–437 (EKPG…SEAP). 2 stretches are compositionally biased toward basic and acidic residues: residues 74 to 83 (GKKEGKENLK) and 97 to 114 (NKDK…DPQR). A compositionally biased stretch (low complexity) spans 180–197 (LASLSPLRKASLSSSSSL).

The protein belongs to the FAM90 family.

The sequence is that of Protein FAM90A20 from Homo sapiens (Human).